Reading from the N-terminus, the 342-residue chain is Holliday junction branch migration complex subunit RuvB (342 aa).

The segment at 1-181 (MEERFLTPKD…FGMVLELEFY (181 aa)) is large ATPase domain (RuvB-L). Residues Leu-20, Arg-21, Gly-62, Lys-65, Thr-66, Thr-67, 128–130 (EDF), Arg-171, Tyr-181, and Arg-218 contribute to the ATP site. Thr-66 contributes to the Mg(2+) binding site. The interval 182–252 (TPDELKQIIK…TVEDAMKIMG (71 aa)) is small ATPAse domain (RuvB-S). The interval 255 to 342 (AEGLDDMDRK…IGPLWDSTGD (88 aa)) is head domain (RuvB-H). Residues Arg-310 and Arg-315 each coordinate DNA.

Belongs to the RuvB family. In terms of assembly, homohexamer. Forms an RuvA(8)-RuvB(12)-Holliday junction (HJ) complex. HJ DNA is sandwiched between 2 RuvA tetramers; dsDNA enters through RuvA and exits via RuvB. An RuvB hexamer assembles on each DNA strand where it exits the tetramer. Each RuvB hexamer is contacted by two RuvA subunits (via domain III) on 2 adjacent RuvB subunits; this complex drives branch migration. In the full resolvosome a probable DNA-RuvA(4)-RuvB(12)-RuvC(2) complex forms which resolves the HJ.

It localises to the cytoplasm. It carries out the reaction ATP + H2O = ADP + phosphate + H(+). Functionally, the RuvA-RuvB-RuvC complex processes Holliday junction (HJ) DNA during genetic recombination and DNA repair, while the RuvA-RuvB complex plays an important role in the rescue of blocked DNA replication forks via replication fork reversal (RFR). RuvA specifically binds to HJ cruciform DNA, conferring on it an open structure. The RuvB hexamer acts as an ATP-dependent pump, pulling dsDNA into and through the RuvAB complex. RuvB forms 2 homohexamers on either side of HJ DNA bound by 1 or 2 RuvA tetramers; 4 subunits per hexamer contact DNA at a time. Coordinated motions by a converter formed by DNA-disengaged RuvB subunits stimulates ATP hydrolysis and nucleotide exchange. Immobilization of the converter enables RuvB to convert the ATP-contained energy into a lever motion, pulling 2 nucleotides of DNA out of the RuvA tetramer per ATP hydrolyzed, thus driving DNA branch migration. The RuvB motors rotate together with the DNA substrate, which together with the progressing nucleotide cycle form the mechanistic basis for DNA recombination by continuous HJ branch migration. Branch migration allows RuvC to scan DNA until it finds its consensus sequence, where it cleaves and resolves cruciform DNA. The sequence is that of Holliday junction branch migration complex subunit RuvB from Kosmotoga olearia (strain ATCC BAA-1733 / DSM 21960 / TBF 19.5.1).